Reading from the N-terminus, the 227-residue chain is 2,3-bisphosphoglycerate-dependent phosphoglycerate mutase (227 aa).

Residues 7–14 (RHGFSEWN), 20–21 (TG), Arg-59, 86–89 (ERHY), Lys-97, 113–114 (RR), and 182–183 (GN) contribute to the substrate site. The active-site Tele-phosphohistidine intermediate is His-8. The Proton donor/acceptor role is filled by Glu-86.

It belongs to the phosphoglycerate mutase family. BPG-dependent PGAM subfamily. Homodimer.

The enzyme catalyses (2R)-2-phosphoglycerate = (2R)-3-phosphoglycerate. It participates in carbohydrate degradation; glycolysis; pyruvate from D-glyceraldehyde 3-phosphate: step 3/5. Its function is as follows. Catalyzes the interconversion of 2-phosphoglycerate and 3-phosphoglycerate. This chain is 2,3-bisphosphoglycerate-dependent phosphoglycerate mutase, found in Haemophilus influenzae (strain ATCC 51907 / DSM 11121 / KW20 / Rd).